A 242-amino-acid polypeptide reads, in one-letter code: Zinc finger protein ZOP1 (242 aa).

The segment at 11 to 42 (KWCEFCKIWIQNNPTSIRNHDLGKRHRECVDK) adopts a Matrin-type zinc-finger fold. Residues 42–71 (KKLTDMRERSAAKDKELKKNEKLLQQIEAK) adopt a coiled-coil conformation. Residues 154–242 (VKKPVSSSGA…PLLGLYNRPF (89 aa)) are disordered. Positions 155–172 (KKPVSSSGAGPSVGKPPG) are enriched in low complexity. Over residues 201-233 (RQDEKPKKVSAEEKAALKAREAARKRVEDREKP) the composition is skewed to basic and acidic residues.

In terms of assembly, component of a pre-mRNA splicing complex. Interacts with STA1. Interacts with PRP31.

Its subcellular location is the nucleus. The protein localises to the cajal body. Functionally, nucleic acid-binding protein that promotes Pol IV-dependent small interfering RNA (siRNA) accumulation, DNA methylation and transcriptional silencing. May possess both RNA-directed DNA methylation (RdDM)-dependent and -independent roles in transcriptional silencing. Acts as a pre-mRNA splicing factor that associates with several typical components of the splicing machinery as well as with Pol II. In Arabidopsis thaliana (Mouse-ear cress), this protein is Zinc finger protein ZOP1.